Here is a 75-residue protein sequence, read N- to C-terminus: Alpha-elapitoxin-Bc2c (75 aa).

A signal peptide spans 1-2 (YT). 5 cysteine pairs are disulfide-bonded: cysteine 5–cysteine 24, cysteine 17–cysteine 45, cysteine 30–cysteine 34, cysteine 49–cysteine 60, and cysteine 61–cysteine 66.

It belongs to the three-finger toxin family. Long-chain subfamily. Type II alpha-neurotoxin sub-subfamily. As to quaternary structure, monomer in solution, homodimer in crystal state. Expressed by the venom gland.

It is found in the secreted. In terms of biological role, binds to muscular and neuronal nicotinic acetylcholine receptor (nAChR) and inhibits acetylcholine from binding to the receptor, thereby impairing neuromuscular and neuronal transmission. Blocks muscle type nAChR. Also binds with high affinity to alpha-7/CHRNA7 nAChRs. In addition, shows a weak inhibition of neuronal alpha-3-beta-2/CHRNA3-CHRNB2 nAChR. Selectively binds to alpha-1-delta subunit interface of the mouse muscle nicotinic acetylcholine receptor, with a 10-fold higher affinity for the adult than for the fetal receptors. In vivo, when intraperitoneally injected into mice, causes flaccid paralysis and respiratory distress, followed by death within 2-4 hours. The sequence is that of Alpha-elapitoxin-Bc2c from Bungarus candidus (Malayan krait).